Here is a 963-residue protein sequence, read N- to C-terminus: Importin-13 (963 aa).

HEAT repeat units lie at residues 24 to 54 (ESVE…QAQV), 56 to 88 (PQAW…KTSR), 95 to 135 (TDQY…LSMM), 142 to 179 (AVAD…EFQT), 194 to 231 (LAVE…SWVQ), 236 to 268 (LQDC…NAIS), 276 to 325 (VNTL…ALLD), 330 to 372 (WQSF…DDIL), 375 to 438 (EAEK…YEML), 440 to 476 (AELL…FQSI), 487 to 522 (VVPG…WLAD), 524 to 558 (PVMI…CREC), 562 to 600 (LPPY…LLSA), 603 to 648 (VEEI…SNLF), 676 to 716 (PVVV…VKTL), 720 to 754 (FAPM…VHIF), 761 to 803 (FPPI…ALKR), 815 to 845 (VKAV…TELL), 860 to 893 (EDGR…FALN), and 897 to 931 (FSLL…QQIL). One can recognise an Importin N-terminal domain in the interval 45–111 (AQKWLMQAQV…KAQLFTQITR (67 aa)).

This sequence belongs to the importin beta family. As to quaternary structure, interacts with UBC9, RAN, RBM8A, eIF-1A and PAX6.

It is found in the cytoplasm. Its subcellular location is the nucleus. In terms of biological role, functions in nuclear protein import as nuclear transport receptor. Serves as receptor for nuclear localization signals (NLS) in cargo substrates. Is thought to mediate docking of the importin/substrate complex to the nuclear pore complex (NPC) through binding to nucleoporin and the complex is subsequently translocated through the pore by an energy requiring, Ran-dependent mechanism. At the nucleoplasmic side of the NPC, Ran binds to the importin, the importin/substrate complex dissociates and importin is re-exported from the nucleus to the cytoplasm where GTP hydrolysis releases Ran. The directionality of nuclear import is thought to be conferred by an asymmetric distribution of the GTP- and GDP-bound forms of Ran between the cytoplasm and nucleus. Mediates the nuclear import of UBC9, the RBM8A/MAGOH complex, PAX6 and probably other members of the paired homeobox family. Also mediates nuclear export of eIF-1A, and the cytoplasmic release of eIF-1A is triggered by the loading of import substrates onto IPO13. This chain is Importin-13 (IPO13), found in Pongo abelii (Sumatran orangutan).